The chain runs to 1409 residues: MAP kinase-activating death domain protein (1409 aa).

The region spanning 26 to 230 is the uDENN domain; sequence RGASQSSPDA…VPVPGKTKVQ (205 aa). A cDENN domain is found at 251-390; that stretch reads RFTLIDFPLH…DATHLKERLK (140 aa). The 105-residue stretch at 392-496 folds into the dDENN domain; the sequence is AINKMTTMTV…ECCLCPKNET (105 aa). 4 disordered regions span residues 654-701, 761-784, 902-1008, and 1015-1034; these read SFDH…MKGL, QHIV…QSKN, SSSA…KVKT, and PQNL…SFLA. 2 stretches are compositionally biased toward polar residues: residues 680–691 and 761–772; these read SDASDTPTSRGS and QHIVRSKTQPNP. Low complexity-rich tracts occupy residues 773–784 and 902–913; these read TSQQTANQQSKN and SSSAPSTMTTPS. Over residues 915–925 the composition is skewed to basic and acidic residues; sequence HSNDILKESRP. Residues 941–961 show a composition bias toward polar residues; that stretch reads LGQNVTPTSTNNHEIAQSTRS. Pro residues predominate over residues 963-1003; sequence ALPPPVPPREAPPIPKRNPPPLGAPPKVPEGARAPPPLPPR. Over residues 1020-1031 the composition is skewed to low complexity; the sequence is PNNQPAQPSSPS. A Death domain is found at 1109–1184; the sequence is GMDQEPSEMI…GLVCSKEINK (76 aa).

Belongs to the MADD family. In terms of assembly, interacts with cab-1. In terms of tissue distribution, expressed in nearly all neurons.

It localises to the cell membrane. The protein localises to the cytoplasm. Its function is as follows. Guanyl-nucleotide exchange factor that regulates small GTPases. Converts GDP-bound inactive form of rab-3 and cab-1 to the GTP-bound active forms. Regulator of presynaptic activity that interacts with rab-3 to regulate synaptic vesicle release. Is also a regulator of the cab-1 synaptic transmission pathway. Probably by converting rab-3 to its GTP-bound active form, plays a role in the recruitment of endophilin unc-57 to synaptic vesicles. Probably by activating rab-3 and thus regulating the trafficking of dense-core vesicles, plays a role in AVG neuron-mediated formation of the right axon tract of the ventral nerve cord. Regulates anterior body muscle contractions (aBOC) and the expulsion steps during the defecation motor program (DMP). Probably by regulating DMP, required for fatty acid uptake by intestinal cells. The polypeptide is MAP kinase-activating death domain protein (aex-3) (Caenorhabditis elegans).